Consider the following 199-residue polypeptide: uncharacterized protein (199 aa).

Residues 7-27 (FWFWLILGIIALFIIVKAIVI) traverse the membrane as a helical segment.

It belongs to the band 7/mec-2 family.

Its subcellular location is the membrane. This is an uncharacterized protein from Methanocaldococcus jannaschii (strain ATCC 43067 / DSM 2661 / JAL-1 / JCM 10045 / NBRC 100440) (Methanococcus jannaschii).